A 370-amino-acid chain; its full sequence is Tryptophan--tRNA ligase (370 aa).

The short motif at 75–83 (PSGKMHFGH) is the 'HIGH' region element. The 'KMSKS' region motif lies at 255–259 (KMSSS).

This sequence belongs to the class-I aminoacyl-tRNA synthetase family.

It localises to the cytoplasm. It carries out the reaction tRNA(Trp) + L-tryptophan + ATP = L-tryptophyl-tRNA(Trp) + AMP + diphosphate + H(+). This Methanocaldococcus jannaschii (strain ATCC 43067 / DSM 2661 / JAL-1 / JCM 10045 / NBRC 100440) (Methanococcus jannaschii) protein is Tryptophan--tRNA ligase.